Consider the following 403-residue polypeptide: LIM/homeobox protein Lhx1 (403 aa).

LIM zinc-binding domains lie at 4 to 54 (CAGC…CKND) and 63 to 117 (CAGC…CKED). Residues 131-147 (ISVTGSDPSLSPESQDP) are compositionally biased toward polar residues. Disordered regions lie at residues 131-185 (ISVT…PRTT) and 318-366 (PAGT…SMHS). Residues 150 to 166 (DDAKDSESANVSDKEAG) show a composition bias toward basic and acidic residues. The segment at residues 179 to 238 (RRGPRTTIKAKQLETLKAAFAATPKPTRHIREQLAQETGLNMRVIQVWFQNRRSKERRMK) is a DNA-binding region (homeobox).

In terms of assembly, interacts with ldb1 via the tandem LIM domains. Both LIM domains are required for optimal binding and binding relieves the inhibitory effect of the LIM domains and activates lhx1. Binding to ldb1 also prevents degradation of ldb1 by rnf12. The stoichiometry of lhx1 and ldb1 is important for their function and an excess of ldb1 can inhibit lhx1 function. Interacts with the N-terminal region of rnf12 by a homeobox-dependent mechanism. As to expression, exhibits a biphasic expression pattern. Initially localized to the Spemann organizer region of gastrulae, leading to expression in prechordal mesoderm and notochord. In the second phase, expressed in the lateral mesoderm and neural plate, eventually concentrating in the pronephros and the CNS. Expressed in the pronephros primordium by late gastrula (stage 12.5) and becomes restricted to the tips of the tubules and ducts as kidney development progresses. In the CNS, becomes progressively recognizable in anatomically distinct structures during larval development. Within the forebrain, shows almost identical expression to lhx5 in the diencephalon, being expressed in alternating stripes to lhx2 and lhx9. Expressed in the diencephalic pretectum within prosomere 1, hypothalamus, ventral thalamus and zona limitans intrathalamica. In the telencephalon, the expression pattern is distinct from lhx5, being localized in the pallium and subpallium. Also expressed in the ventral territories of midbrain (mesencephalon) and hindbrain (rhombencephalon), being expressed in the mesencephalic tegmentum and hindbrain reticular formation. Also shows intense expression in the cerebellum including Purkinje cells.

The protein localises to the nucleus. Involved in the establishment of the body plan via the Spemann organizer during gastrulation. Transcriptional activator required to induce organizer gene expression downstream of siamois. Promotes head formation by binding to 5'-TAAT'-3' elements in the promoters of head organizer genes cer1 and gsc to stimulate expression. Binds as a complex with siamois and mix-A/mix.1 to the cer1 promoter, and with ldb1 and otx2 to the gsc promoter. Also involved in neural induction via the organizer, including a role in notochord formation. Acts synergistically with ldb1 and ssbp in subsequent axis formation. Involved in kidney development, acting synergistically with pax8 to establish the pronephric primordium in late gastrulae/early neurulae and with pax2 during pronephric morphogenesis in tailbud stages. Has a later role in mediating the activity of inhibitors of ventralization. The sequence is that of LIM/homeobox protein Lhx1 (lhx1) from Xenopus laevis (African clawed frog).